We begin with the raw amino-acid sequence, 687 residues long: Glycine--tRNA ligase beta subunit (687 aa).

It belongs to the class-II aminoacyl-tRNA synthetase family. In terms of assembly, tetramer of two alpha and two beta subunits.

Its subcellular location is the cytoplasm. The catalysed reaction is tRNA(Gly) + glycine + ATP = glycyl-tRNA(Gly) + AMP + diphosphate. The chain is Glycine--tRNA ligase beta subunit from Neisseria gonorrhoeae (strain NCCP11945).